The chain runs to 206 residues: Large ribosomal subunit protein uL4 (206 aa).

Residues 42 to 94 are disordered; sequence RRQQGSHKAQGRGDVSRTGSKMYKQKGTGRARHHSARAPQFRGGGQAHGPVVR. Positions 64-77 are enriched in basic residues; the sequence is YKQKGTGRARHHSA.

It belongs to the universal ribosomal protein uL4 family. As to quaternary structure, part of the 50S ribosomal subunit.

In terms of biological role, one of the primary rRNA binding proteins, this protein initially binds near the 5'-end of the 23S rRNA. It is important during the early stages of 50S assembly. It makes multiple contacts with different domains of the 23S rRNA in the assembled 50S subunit and ribosome. Functionally, forms part of the polypeptide exit tunnel. The protein is Large ribosomal subunit protein uL4 of Brucella abortus biovar 1 (strain 9-941).